Consider the following 302-residue polypeptide: Aspartate carbamoyltransferase catalytic subunit (302 aa).

Positions 53 and 54 each coordinate carbamoyl phosphate. K82 is an L-aspartate binding site. The carbamoyl phosphate site is built by R103, H131, and Q134. L-aspartate contacts are provided by R164 and R223. Residues L260 and P261 each contribute to the carbamoyl phosphate site.

Belongs to the aspartate/ornithine carbamoyltransferase superfamily. ATCase family. In terms of assembly, heterooligomer of catalytic and regulatory chains.

It carries out the reaction carbamoyl phosphate + L-aspartate = N-carbamoyl-L-aspartate + phosphate + H(+). It participates in pyrimidine metabolism; UMP biosynthesis via de novo pathway; (S)-dihydroorotate from bicarbonate: step 2/3. In terms of biological role, catalyzes the condensation of carbamoyl phosphate and aspartate to form carbamoyl aspartate and inorganic phosphate, the committed step in the de novo pyrimidine nucleotide biosynthesis pathway. This Methanococcus maripaludis (strain C7 / ATCC BAA-1331) protein is Aspartate carbamoyltransferase catalytic subunit.